A 274-amino-acid polypeptide reads, in one-letter code: NAD kinase (274 aa).

Catalysis depends on D59, which acts as the Proton acceptor. NAD(+) contacts are provided by residues 59–60 (DG), K64, 128–129 (ND), D158, 169–174 (TAYALS), and A193.

This sequence belongs to the NAD kinase family. A divalent metal cation is required as a cofactor.

It is found in the cytoplasm. It catalyses the reaction NAD(+) + ATP = ADP + NADP(+) + H(+). Functionally, involved in the regulation of the intracellular balance of NAD and NADP, and is a key enzyme in the biosynthesis of NADP. Catalyzes specifically the phosphorylation on 2'-hydroxyl of the adenosine moiety of NAD to yield NADP. The sequence is that of NAD kinase from Petrotoga mobilis (strain DSM 10674 / SJ95).